A 244-amino-acid chain; its full sequence is CTD nuclear envelope phosphatase 1 (244 aa).

A helical transmembrane segment spans residues 7 to 29; that stretch reads LLGLRGFVAFAAKLWSFVLYLLR. The FCP1 homology domain occupies 57–224; it reads SQVKRKVLVL…LNLLPMLDAL (168 aa).

The protein belongs to the dullard family. Interacts with bmpr1a, bmpr1b and bmpr2.

It localises to the membrane. Its subcellular location is the cytoplasm. It is found in the perinuclear region. The enzyme catalyses O-phospho-L-seryl-[protein] + H2O = L-seryl-[protein] + phosphate. It catalyses the reaction O-phospho-L-threonyl-[protein] + H2O = L-threonyl-[protein] + phosphate. Functionally, serine/threonine protein phosphatase that may dephosphorylate and activate lipins. Lipins are phosphatidate phosphatases that catalyze the conversion of phosphatidic acid to diacylglycerol and control the metabolism of fatty acids at different levels. May indirectly modulate the lipid composition of nuclear and/or endoplasmic reticulum membranes and be required for proper nuclear membrane morphology and/or dynamics. May also indirectly regulate the production of lipid droplets and triacylglycerol. Induces neuronal differentiation by antagonizing BMP signaling. Acts both by dephosphorylating BMPR1A and by promoting BMPR2 proteasomal degradation. The sequence is that of CTD nuclear envelope phosphatase 1 (ctdnep1) from Xenopus tropicalis (Western clawed frog).